Reading from the N-terminus, the 427-residue chain is Zinc finger protein DPF3 (427 aa).

Positions 182-244 (LENDENADEV…NDAASQDDHD (63 aa)) are disordered. Over residues 184–199 (NDENADEVNEEEDLEE) the composition is skewed to acidic residues. The span at 233–244 (RRNDAASQDDHD) shows a compositional bias: basic and acidic residues. The C2H2-type zinc-finger motif lies at 247–270 (YVCDICGKRYKNRPGLSYHYAHTH). The tract at residues 272–301 (ASEEGDEAREQETRSSPVHRNENHKPQKGP) is disordered. Residues 279–296 (AREQETRSSPVHRNENHK) show a composition bias toward basic and acidic residues. PHD-type zinc fingers lie at residues 308-368 (NNYC…CKSC) and 365-415 (CKSC…CREL).

It belongs to the requiem/DPF family. Component of the BAF complex. Interacts with acetylated histones H3 and H4. Component of neuron-specific chromatin remodeling complex (nBAF complex), a subfamily of ATP-dependent SWI/SNF chromatin remodeling complexes. As to expression, expressed in the heart and somites.

The protein localises to the nucleus. In terms of biological role, muscle-specific component of the BAF complex, a multiprotein complex involved in transcriptional activation and repression of select genes by chromatin remodeling (alteration of DNA-nucleosome topology). Specifically binds acetylated lysines on histone 3 and 4. In the complex, it acts as a tissue-specific anchor between histone acetylations and methylations and chromatin remodeling. It thereby probably plays an essential role in heart and skeletal muscle development. Belongs to the neuron-specific chromatin remodeling complex (nBAF complex) and plays a role in neural development. This Gallus gallus (Chicken) protein is Zinc finger protein DPF3 (DPF3).